Reading from the N-terminus, the 359-residue chain is Outer membrane protein A (359 aa).

The N-terminal stretch at 1–21 (MKKTAIALAVALAGFATVAQA) is a signal peptide. Beta stranded transmembrane passes span 27–37 (TWYTGAKLGWS), 62–73 (QLGAGAFLGYQA), 77–85 (LGFELGYDW), 103–114 (QGVQLAAKLSYP), 119–127 (LDIYTRLGG), 154–163 (PLAAVGVEYA), 168–175 (WATRLDYQ), and 194–202 (MLSLGVSYR). 5 tandem repeats follow at residues 210–211 (AP), 212–213 (AP), 214–215 (AP), 216–217 (AP), and 218–219 (AP). Residues 210–219 (APAPAPAPAP) form a 5 X 2 AA tandem repeats of A-P region. The OmpA-like domain occupies 221–351 (VETKRFTLKS…RVEIEVKGIK (131 aa)). Cys322 and Cys336 form a disulfide bridge.

It belongs to the outer membrane OOP (TC 1.B.6) superfamily. OmpA family. In terms of assembly, monomer and homodimer.

It localises to the cell outer membrane. In terms of biological role, with TolR probably plays a role in maintaining the position of the peptidoglycan cell wall in the periplasm. Acts as a porin with low permeability that allows slow penetration of small solutes; an internal gate slows down solute passage. The sequence is that of Outer membrane protein A from Serratia marcescens.